A 321-amino-acid chain; its full sequence is Lipoyl synthase (321 aa).

[4Fe-4S] cluster contacts are provided by Cys68, Cys73, Cys79, Cys94, Cys98, Cys101, and Ser308. The Radical SAM core domain maps to Phe80–Thr297.

Belongs to the radical SAM superfamily. Lipoyl synthase family. Requires [4Fe-4S] cluster as cofactor.

The protein resides in the cytoplasm. The catalysed reaction is [[Fe-S] cluster scaffold protein carrying a second [4Fe-4S](2+) cluster] + N(6)-octanoyl-L-lysyl-[protein] + 2 oxidized [2Fe-2S]-[ferredoxin] + 2 S-adenosyl-L-methionine + 4 H(+) = [[Fe-S] cluster scaffold protein] + N(6)-[(R)-dihydrolipoyl]-L-lysyl-[protein] + 4 Fe(3+) + 2 hydrogen sulfide + 2 5'-deoxyadenosine + 2 L-methionine + 2 reduced [2Fe-2S]-[ferredoxin]. The protein operates within protein modification; protein lipoylation via endogenous pathway; protein N(6)-(lipoyl)lysine from octanoyl-[acyl-carrier-protein]: step 2/2. Catalyzes the radical-mediated insertion of two sulfur atoms into the C-6 and C-8 positions of the octanoyl moiety bound to the lipoyl domains of lipoate-dependent enzymes, thereby converting the octanoylated domains into lipoylated derivatives. In Escherichia fergusonii (strain ATCC 35469 / DSM 13698 / CCUG 18766 / IAM 14443 / JCM 21226 / LMG 7866 / NBRC 102419 / NCTC 12128 / CDC 0568-73), this protein is Lipoyl synthase.